We begin with the raw amino-acid sequence, 154 residues long: PTTG1IP family member 2 (154 aa).

Positions 1-26 (MCWLRAWGQILLPVFLSLFLIQLLIS) are cleaved as a signal peptide. Over 27–97 (FSENGFIHSP…SIYWLNCKVD (71 aa)) the chain is Extracellular. The helical transmembrane segment at 98-118 (MFGIMMLLLIAVLITGFVWYC) threads the bilayer. Residues 119-154 (CAYHFYLQDLNRNRVYFYGRRETVPIHDRSATVYDE) are Cytoplasmic-facing.

It localises to the membrane. The chain is PTTG1IP family member 2 from Homo sapiens (Human).